A 33-amino-acid chain; its full sequence is Photosystem II reaction center protein Psb30 (33 aa).

A helical membrane pass occupies residues 7–27 (IQLGSLTLITLTGPLIIGIIF).

Belongs to the Psb30/Ycf12 family. In terms of assembly, PSII is composed of 1 copy each of membrane proteins PsbA, PsbB, PsbC, PsbD, PsbE, PsbF, PsbH, PsbI, PsbJ, PsbK, PsbL, PsbM, PsbT, PsbY, PsbZ, Psb30/Ycf12, peripheral proteins of the oxygen-evolving complex and a large number of cofactors. It forms dimeric complexes.

The protein localises to the plastid. The protein resides in the chloroplast thylakoid membrane. A core subunit of photosystem II (PSII), probably helps stabilize the reaction center. The protein is Photosystem II reaction center protein Psb30 of Euglena gracilis.